The sequence spans 24 residues: Waglerin-3 (24 aa).

The segment covering 1-10 (SLGGKPDLRP) has biased composition (basic and acidic residues). A disordered region spans residues 1–24 (SLGGKPDLRPCHPPCHYIPRPKPR). Cys11 and Cys15 are disulfide-bonded.

This sequence belongs to the waglerin family. As to quaternary structure, waglerin-1 is monomeric. Amidation of the waglerin-1 C-terminus increases the affinity by 2-fold. As to expression, expressed by the venom gland.

The protein localises to the secreted. In terms of biological role, waglerin-1 selectively blocks the epsilon subunit of muscle nicotinic acetylcholine receptor (nAChR). Also has effects on rodent ionotropic GABA(A) receptors (GABR), since it potentiates I(GABA) in some neurons and depresses I(GABA) in others. In mice, it elicits tachypnea, ocular proptosis, rapid collapse and spasms, whereas no toxic effects on respiration and blood pressure are observed in rats. Its function is as follows. Waglerin-3 selectively blocks the epsilon subunit of muscle nicotinic acetylcholine receptor (nAChR). It elicits tachypnea, ocular proptosis, rapid collapse and spasms in mice. It causes death by respiratory failure. The protein is Waglerin-3 of Tropidolaemus wagleri (Wagler's pit viper).